Here is a 440-residue protein sequence, read N- to C-terminus: Phosphatidylcholine-sterol acyltransferase (440 aa).

The N-terminal stretch at 1–24 (MGPPGSPWQWVPLLLGLLLPPAAP) is a signal peptide. N44 carries N-linked (GlcNAc...) asparagine glycosylation. C74 and C98 are disulfide-bonded. N-linked (GlcNAc...) asparagine glycosylation occurs at N108. The Nucleophile role is filled by S205. N296 is a glycosylation site (N-linked (GlcNAc...) asparagine). C337 and C380 are disulfide-bonded. Catalysis depends on charge relay system residues D369 and H401. The N-linked (GlcNAc...) asparagine glycan is linked to N408.

It belongs to the AB hydrolase superfamily. Lipase family. Most abundant in liver and cerebellum.

It is found in the secreted. The enzyme catalyses a sterol + a 1,2-diacyl-sn-glycero-3-phosphocholine = a sterol ester + a 1-acyl-sn-glycero-3-phosphocholine. With respect to regulation, APOA1 is the most potent activator in plasma. Also activated by APOE, APOC1 and APOA4. In terms of biological role, central enzyme in the extracellular metabolism of plasma lipoproteins. Synthesized mainly in the liver and secreted into plasma where it converts cholesterol and phosphatidylcholines (lecithins) to cholesteryl esters and lysophosphatidylcholines on the surface of high and low density lipoproteins (HDLs and LDLs). The cholesterol ester is then transported back to the liver. Has a preference for plasma 16:0-18:2 or 18:O-18:2 phosphatidylcholines. Also produced in the brain by primary astrocytes, and esterifies free cholesterol on nascent APOE-containing lipoproteins secreted from glia and influences cerebral spinal fluid (CSF) APOE- and APOA1 levels. Together with APOE and the cholesterol transporter ABCA1, plays a key role in the maturation of glial-derived, nascent lipoproteins. Required for remodeling high-density lipoprotein particles into their spherical forms. In Papio anubis (Olive baboon), this protein is Phosphatidylcholine-sterol acyltransferase (LCAT).